Consider the following 182-residue polypeptide: Dihydrofolate reductase (182 aa).

In terms of domain architecture, DHFR spans 3-180; that stretch reads RFNLIVAVCE…IKFEYKILEK (178 aa). NADP(+)-binding positions include alanine 9 and 15 to 21; that span reads GIGIRGD. 29–34 serves as a coordination point for substrate; that stretch reads ELKYFS. 53-55 contributes to the NADP(+) binding site; the sequence is RKT. Position 69 (arginine 69) interacts with substrate. Residues 75-77 and 113-120 each bind NADP(+); these read STT and GGSGVYEE.

This sequence belongs to the dihydrofolate reductase family. As to quaternary structure, monomer. Interacts with vg.

It carries out the reaction (6S)-5,6,7,8-tetrahydrofolate + NADP(+) = 7,8-dihydrofolate + NADPH + H(+). It participates in cofactor biosynthesis; tetrahydrofolate biosynthesis; 5,6,7,8-tetrahydrofolate from 7,8-dihydrofolate: step 1/1. Functionally, by interacting with vestigial (vg), may control genes involved in DNA replication. Key enzyme in folate metabolism. Catalyzes an essential reaction for de novo glycine and purine synthesis, and for DNA precursor synthesis. In Drosophila melanogaster (Fruit fly), this protein is Dihydrofolate reductase (Dhfr).